Here is a 59-residue protein sequence, read N- to C-terminus: Large ribosomal subunit protein uL30 (59 aa).

This sequence belongs to the universal ribosomal protein uL30 family. In terms of assembly, part of the 50S ribosomal subunit.

This is Large ribosomal subunit protein uL30 from Erwinia tasmaniensis (strain DSM 17950 / CFBP 7177 / CIP 109463 / NCPPB 4357 / Et1/99).